We begin with the raw amino-acid sequence, 776 residues long: Probable E3 ubiquitin-protein ligase HECTD2 (776 aa).

The segment at 1–46 (MSEAVRVPSPATPLVVAAAAPEERKGKESEREKLPPIVSAGAGATA) is disordered. Low complexity predominate over residues 7-20 (VPSPATPLVVAAAA). Phosphoserine is present on Ser-9. Over residues 21-34 (PEERKGKESEREKL) the composition is skewed to basic and acidic residues. Positions 437-776 (KRADLKKKLK…ISNSEGFGLE (340 aa)) constitute an HECT domain. Catalysis depends on Cys-744, which acts as the Glycyl thioester intermediate.

It catalyses the reaction S-ubiquitinyl-[E2 ubiquitin-conjugating enzyme]-L-cysteine + [acceptor protein]-L-lysine = [E2 ubiquitin-conjugating enzyme]-L-cysteine + N(6)-ubiquitinyl-[acceptor protein]-L-lysine.. Its pathway is protein modification; protein ubiquitination. Functionally, E3 ubiquitin-protein ligase which accepts ubiquitin from an E2 ubiquitin-conjugating enzyme in the form of a thioester and then directly transfers the ubiquitin to targeted substrates. The chain is Probable E3 ubiquitin-protein ligase HECTD2 (HECTD2) from Pongo abelii (Sumatran orangutan).